A 523-amino-acid polypeptide reads, in one-letter code: Cytochrome P450 monooxygenase bsc5 (523 aa).

A helical transmembrane segment spans residues 16–36 (MQLHWTVLGLLPVLFIAILGP). N-linked (GlcNAc...) asparagine glycosylation is found at N178, N281, and N403. C459 is a heme binding site.

This sequence belongs to the cytochrome P450 family. The cofactor is heme.

It localises to the membrane. The protein operates within mycotoxin biosynthesis. Functionally, cytochrome P450 monooxygenase; part of the gene cluster that mediates the biosynthesis of the diterpene glucoside brassicicene C. In the first step of the brassicicene C biosynthesis, the bifunctional diterpene synthase bsc8 that possesses both prenyl transferase and terpene cyclase activity, converts isopentenyl diphosphate and dimethylallyl diphosphate into geranylgeranyl diphosphate (GGDP) that is further converted into fusicocca-2,10(14)-diene, the first precursor for brassicicene C. Fusicocca-2,10(14)-diene is then substrate of cytochrome P450 monooxygenase bsc1 for hydroxylation at the C-8 position. Oxidation at C-16 position to aldehyde is then catalyzed by the cytochrome P450 monooyxygenase bsc7, yielding fusicocca-2,10(14)-diene-8-beta,16-diol. Follows the isomerization of the double bond and reduction of aldehyde to alcohol catalyzed by the short-chain dehydrogenase/reductase bsc3 to yield the diol compound fusicocca-1,10(14)-diene-8 beta,16-diol. The next step is the oxidation at the C-3 position of fusicocca-2,10(14)-diene-8-beta,16-diol catalyzed by the alpha-ketoglutarate dependent dioxygenase bsc9, to produce a triol compound. Methylation of the hydroxy group at position 16 is performed by the methyltransferase bsc6. 16-O-methylation is followed by oxidation at the C-13 position to ketone and an alkyl shift of the methyl group leads to brassicicene C. Although the probable acetyltransferase bsc4 is included in the gene cluster, no acetylation reactions are necessary for brassicicene C biosynthesis. However, the fact that brassicicene E, which is a structurally related compound having an acetoxy group at position 12, was previously isolated from another strain of A.brassicicola suggests that the ATCC 96836 strain might also produce a small amount of brassicicene E. The sequence is that of Cytochrome P450 monooxygenase bsc5 from Alternaria brassicicola (Dark leaf spot agent).